The following is a 220-amino-acid chain: Peptidyl-tRNA hydrolase (220 aa).

Tyrosine 14 contributes to the tRNA binding site. The active-site Proton acceptor is the histidine 19. Phenylalanine 66, asparagine 68, and asparagine 114 together coordinate tRNA. Positions 184–220 are disordered; that stretch reads QAFNSTDLRPRPEPVPAPQPADVSGPQETGPAERPEV.

It belongs to the PTH family. As to quaternary structure, monomer.

The protein resides in the cytoplasm. The catalysed reaction is an N-acyl-L-alpha-aminoacyl-tRNA + H2O = an N-acyl-L-amino acid + a tRNA + H(+). Its function is as follows. Hydrolyzes ribosome-free peptidyl-tRNAs (with 1 or more amino acids incorporated), which drop off the ribosome during protein synthesis, or as a result of ribosome stalling. Catalyzes the release of premature peptidyl moieties from peptidyl-tRNA molecules trapped in stalled 50S ribosomal subunits, and thus maintains levels of free tRNAs and 50S ribosomes. The protein is Peptidyl-tRNA hydrolase of Deinococcus deserti (strain DSM 17065 / CIP 109153 / LMG 22923 / VCD115).